Reading from the N-terminus, the 278-residue chain is Secreted RxLR effector protein 151 (278 aa).

The first 18 residues, 1–18, serve as a signal peptide directing secretion; it reads MRNRAVLFGLFFIGYSSC. The RxLR-dEER motif lies at 49-64; the sequence is RLLQVDGPKRILAEER.

The protein belongs to the RxLR effector family.

Its subcellular location is the secreted. The protein resides in the host endoplasmic reticulum membrane. Functionally, secreted effector that completely suppresses the host cell death induced by cell death-inducing proteins. In Plasmopara viticola (Downy mildew of grapevine), this protein is Secreted RxLR effector protein 151.